The primary structure comprises 59 residues: Large ribosomal subunit protein bL32 (59 aa).

The disordered stretch occupies residues 1 to 20 (MAVQQNKKSKSKKGMRRSHD). Positions 7–19 (KKSKSKKGMRRSH) are enriched in basic residues.

The protein belongs to the bacterial ribosomal protein bL32 family.

The chain is Large ribosomal subunit protein bL32 from Nitratidesulfovibrio vulgaris (strain DSM 19637 / Miyazaki F) (Desulfovibrio vulgaris).